The primary structure comprises 155 residues: Protein SprT-like (155 aa).

The SprT-like domain maps to 7-144 (QRHMEEVSLQ…CGSCGGKLKQ (138 aa)). Residue histidine 67 coordinates Zn(2+). The active site involves glutamate 68. Zn(2+) is bound at residue histidine 71.

This sequence belongs to the SprT family. Zn(2+) serves as cofactor.

It localises to the cytoplasm. In Listeria welshimeri serovar 6b (strain ATCC 35897 / DSM 20650 / CCUG 15529 / CIP 8149 / NCTC 11857 / SLCC 5334 / V8), this protein is Protein SprT-like.